The following is a 478-amino-acid chain: Protein nucleotidyltransferase YdiU (478 aa).

ATP-binding residues include Gly84, Gly86, Arg87, Lys107, Asp119, Gly120, Arg170, and Arg177. Asp246 functions as the Proton acceptor in the catalytic mechanism. Positions 247 and 256 each coordinate Mg(2+). Position 256 (Asp256) interacts with ATP.

The protein belongs to the SELO family. Requires Mg(2+) as cofactor. It depends on Mn(2+) as a cofactor.

It catalyses the reaction L-seryl-[protein] + ATP = 3-O-(5'-adenylyl)-L-seryl-[protein] + diphosphate. The catalysed reaction is L-threonyl-[protein] + ATP = 3-O-(5'-adenylyl)-L-threonyl-[protein] + diphosphate. The enzyme catalyses L-tyrosyl-[protein] + ATP = O-(5'-adenylyl)-L-tyrosyl-[protein] + diphosphate. It carries out the reaction L-histidyl-[protein] + UTP = N(tele)-(5'-uridylyl)-L-histidyl-[protein] + diphosphate. It catalyses the reaction L-seryl-[protein] + UTP = O-(5'-uridylyl)-L-seryl-[protein] + diphosphate. The catalysed reaction is L-tyrosyl-[protein] + UTP = O-(5'-uridylyl)-L-tyrosyl-[protein] + diphosphate. Its function is as follows. Nucleotidyltransferase involved in the post-translational modification of proteins. It can catalyze the addition of adenosine monophosphate (AMP) or uridine monophosphate (UMP) to a protein, resulting in modifications known as AMPylation and UMPylation. The sequence is that of Protein nucleotidyltransferase YdiU from Escherichia coli O9:H4 (strain HS).